The primary structure comprises 230 residues: Sugar fermentation stimulation protein homolog (230 aa).

Belongs to the SfsA family.

In Caldivirga maquilingensis (strain ATCC 700844 / DSM 13496 / JCM 10307 / IC-167), this protein is Sugar fermentation stimulation protein homolog.